Consider the following 141-residue polypeptide: SsrA-binding protein (141 aa).

This sequence belongs to the SmpB family.

The protein localises to the cytoplasm. Its function is as follows. Required for rescue of stalled ribosomes mediated by trans-translation. Binds to transfer-messenger RNA (tmRNA), required for stable association of tmRNA with ribosomes. tmRNA and SmpB together mimic tRNA shape, replacing the anticodon stem-loop with SmpB. tmRNA is encoded by the ssrA gene; the 2 termini fold to resemble tRNA(Ala) and it encodes a 'tag peptide', a short internal open reading frame. During trans-translation Ala-aminoacylated tmRNA acts like a tRNA, entering the A-site of stalled ribosomes, displacing the stalled mRNA. The ribosome then switches to translate the ORF on the tmRNA; the nascent peptide is terminated with the 'tag peptide' encoded by the tmRNA and targeted for degradation. The ribosome is freed to recommence translation, which seems to be the essential function of trans-translation. The chain is SsrA-binding protein from Ureaplasma parvum serovar 3 (strain ATCC 27815 / 27 / NCTC 11736).